A 248-amino-acid polypeptide reads, in one-letter code: Ribonuclease PH (248 aa).

Phosphate is bound by residues Arg86 and Gly124–Arg126.

Belongs to the RNase PH family. Homohexameric ring arranged as a trimer of dimers.

It carries out the reaction tRNA(n+1) + phosphate = tRNA(n) + a ribonucleoside 5'-diphosphate. In terms of biological role, phosphorolytic 3'-5' exoribonuclease that plays an important role in tRNA 3'-end maturation. Removes nucleotide residues following the 3'-CCA terminus of tRNAs; can also add nucleotides to the ends of RNA molecules by using nucleoside diphosphates as substrates, but this may not be physiologically important. Probably plays a role in initiation of 16S rRNA degradation (leading to ribosome degradation) during starvation. The sequence is that of Ribonuclease PH from Listeria innocua serovar 6a (strain ATCC BAA-680 / CLIP 11262).